The sequence spans 123 residues: Peptide methionine sulfoxide reductase MsrA (123 aa).

Cys8 is a catalytic residue.

It belongs to the MsrA Met sulfoxide reductase family.

It carries out the reaction L-methionyl-[protein] + [thioredoxin]-disulfide + H2O = L-methionyl-(S)-S-oxide-[protein] + [thioredoxin]-dithiol. It catalyses the reaction [thioredoxin]-disulfide + L-methionine + H2O = L-methionine (S)-S-oxide + [thioredoxin]-dithiol. Has an important function as a repair enzyme for proteins that have been inactivated by oxidation. Catalyzes the reversible oxidation-reduction of methionine sulfoxide in proteins to methionine. In Thermoactinomyces vulgaris, this protein is Peptide methionine sulfoxide reductase MsrA.